A 452-amino-acid polypeptide reads, in one-letter code: PTS system N-acetylglucosamine-specific EIICB component (452 aa).

Residues 1 to 361 (MLSFLQKLGK…LNLKTPGRED (361 aa)) enclose the PTS EIIC type-1 domain. The next 9 helical transmembrane spans lie at 8–28 (LGKSFMLPIAVLPAVGIILAL), 42–62 (AGTAVFDHLPLIFAIGIAIGI), 91–111 (TNNMAVFGGIIAGLIAGYTYN), 130–150 (LVPILTAIITIILAGIFGVVW), 163–183 (WMLGLGGIGAGIFGLFNRLLI), 223–243 (MTGFFPIMMFGLPAACLAMVV), 257–277 (MIGFALTAFITGITEPIEFAF), 279–299 (FLSPLLYAVHAVLTGLSLFIV), and 329–349 (LLLLVGICYAAVYFIVFYVLI). The PTS EIIB type-1 domain occupies 375 to 452 (DVNENIMLKG…AAEELRAAVK (78 aa)). Cys-397 (phosphocysteine intermediate; for EIIB activity) is an active-site residue.

In terms of assembly, interacts with FloT.

The protein localises to the cell membrane. It is found in the membrane raft. It carries out the reaction N(pros)-phospho-L-histidyl-[protein] + N-acetyl-D-glucosamine(out) = N-acetyl-D-glucosamine 6-phosphate(in) + L-histidyl-[protein]. Functionally, the phosphoenolpyruvate-dependent sugar phosphotransferase system (sugar PTS), a major carbohydrate active -transport system, catalyzes the phosphorylation of incoming sugar substrates concomitantly with their translocation across the cell membrane. This system is involved in N-acetylglucosamine transport. The sequence is that of PTS system N-acetylglucosamine-specific EIICB component (nagP) from Bacillus subtilis (strain 168).